A 166-amino-acid chain; its full sequence is Small ribosomal subunit protein uS5 (166 aa).

The S5 DRBM domain occupies 12-75 (YIEKLVQVNR…EAARRNMIQV (64 aa)).

Belongs to the universal ribosomal protein uS5 family. As to quaternary structure, part of the 30S ribosomal subunit. Contacts proteins S4 and S8.

In terms of biological role, with S4 and S12 plays an important role in translational accuracy. Functionally, located at the back of the 30S subunit body where it stabilizes the conformation of the head with respect to the body. The chain is Small ribosomal subunit protein uS5 from Pseudomonas putida (strain ATCC 700007 / DSM 6899 / JCM 31910 / BCRC 17059 / LMG 24140 / F1).